Here is a 492-residue protein sequence, read N- to C-terminus: Aspartyl/glutamyl-tRNA(Asn/Gln) amidotransferase subunit B (492 aa).

Belongs to the GatB/GatE family. GatB subfamily. In terms of assembly, heterotrimer of A, B and C subunits.

It carries out the reaction L-glutamyl-tRNA(Gln) + L-glutamine + ATP + H2O = L-glutaminyl-tRNA(Gln) + L-glutamate + ADP + phosphate + H(+). It catalyses the reaction L-aspartyl-tRNA(Asn) + L-glutamine + ATP + H2O = L-asparaginyl-tRNA(Asn) + L-glutamate + ADP + phosphate + 2 H(+). Functionally, allows the formation of correctly charged Asn-tRNA(Asn) or Gln-tRNA(Gln) through the transamidation of misacylated Asp-tRNA(Asn) or Glu-tRNA(Gln) in organisms which lack either or both of asparaginyl-tRNA or glutaminyl-tRNA synthetases. The reaction takes place in the presence of glutamine and ATP through an activated phospho-Asp-tRNA(Asn) or phospho-Glu-tRNA(Gln). The protein is Aspartyl/glutamyl-tRNA(Asn/Gln) amidotransferase subunit B of Dehalococcoides mccartyi (strain CBDB1).